The primary structure comprises 414 residues: Serine hydroxymethyltransferase (414 aa).

Residues Leu-121 and 125-127 each bind (6S)-5,6,7,8-tetrahydrofolate; that span reads GHL. N6-(pyridoxal phosphate)lysine is present on Lys-229.

This sequence belongs to the SHMT family. Homodimer. Pyridoxal 5'-phosphate serves as cofactor.

It is found in the cytoplasm. It carries out the reaction (6R)-5,10-methylene-5,6,7,8-tetrahydrofolate + glycine + H2O = (6S)-5,6,7,8-tetrahydrofolate + L-serine. It functions in the pathway one-carbon metabolism; tetrahydrofolate interconversion. The protein operates within amino-acid biosynthesis; glycine biosynthesis; glycine from L-serine: step 1/1. Its function is as follows. Catalyzes the reversible interconversion of serine and glycine with tetrahydrofolate (THF) serving as the one-carbon carrier. This reaction serves as the major source of one-carbon groups required for the biosynthesis of purines, thymidylate, methionine, and other important biomolecules. Also exhibits THF-independent aldolase activity toward beta-hydroxyamino acids, producing glycine and aldehydes, via a retro-aldol mechanism. The polypeptide is Serine hydroxymethyltransferase (Polynucleobacter asymbioticus (strain DSM 18221 / CIP 109841 / QLW-P1DMWA-1) (Polynucleobacter necessarius subsp. asymbioticus)).